Consider the following 22-residue polypeptide: Chlorate reductase subunit gamma (22 aa).

The segment at 1–22 (EXSEQNPNILEIKPGDTVKVXT) is disordered.

In terms of assembly, heterotrimer of alpha, beta and gamma subunits. Requires heme b as cofactor.

It is found in the cytoplasm. May transfer electrons to the iron-sulfur centers of the beta subunit of chlorate reductase. This chain is Chlorate reductase subunit gamma, found in Stutzerimonas chloritidismutans (Pseudomonas chloritidismutans).